We begin with the raw amino-acid sequence, 344 residues long: 4-hydroxy-3-methylbut-2-en-1-yl diphosphate synthase (flavodoxin) (344 aa).

4 residues coordinate [4Fe-4S] cluster: cysteine 253, cysteine 256, cysteine 288, and glutamate 295.

The protein belongs to the IspG family. [4Fe-4S] cluster is required as a cofactor.

It carries out the reaction (2E)-4-hydroxy-3-methylbut-2-enyl diphosphate + oxidized [flavodoxin] + H2O + 2 H(+) = 2-C-methyl-D-erythritol 2,4-cyclic diphosphate + reduced [flavodoxin]. It participates in isoprenoid biosynthesis; isopentenyl diphosphate biosynthesis via DXP pathway; isopentenyl diphosphate from 1-deoxy-D-xylulose 5-phosphate: step 5/6. Functionally, converts 2C-methyl-D-erythritol 2,4-cyclodiphosphate (ME-2,4cPP) into 1-hydroxy-2-methyl-2-(E)-butenyl 4-diphosphate. This Thermotoga maritima (strain ATCC 43589 / DSM 3109 / JCM 10099 / NBRC 100826 / MSB8) protein is 4-hydroxy-3-methylbut-2-en-1-yl diphosphate synthase (flavodoxin).